We begin with the raw amino-acid sequence, 454 residues long: Retinoblastoma-binding protein homolog 5 (454 aa).

WD repeat units lie at residues 23–64 (LQNA…RTFS), 65–104 (AHCLPVSCLSWSRDGRKLLTSSADNSIAMFDVLAGTLLHR), 153–192 (SSDESASCVSYDRKGKYIIAGTGKGKLLIYNAETLKCVAW), 196–235 (NTVQQIRQIIVPMKSRFIITNTQDRVIRTYELEDLLHQRG), 248–288 (VNKA…LIKI), and 292–330 (NKGEALLDVQWHPTRPIILSIAQGTVSMWTQAHVENWSA).

In terms of assembly, component of the SET2 complex (also known as the SET1/COMPASS complex), which contains at least set-2, swd-2.1, cfp-1, rbbp-5, wdr-5.1, dpy-30 and ash-2.

The protein resides in the nucleus. Its function is as follows. Required for di- and trimethylation at 'Lys-4' of histone H3. Regulates left/right asymmetry of ASE sensory neurons, via its role as a component of the SET2 complex. The sequence is that of Retinoblastoma-binding protein homolog 5 (rbbp-5) from Caenorhabditis elegans.